The chain runs to 172 residues: Putative phosphoesterase BCG9842_B4061 (172 aa).

His-34 acts as the Proton donor in catalysis. 2 consecutive short sequence motifs (HXTX) follow at residues 34-37 (HITL) and 115-118 (HLTI). Residue His-115 is the Proton acceptor of the active site.

It belongs to the 2H phosphoesterase superfamily. YjcG family.

In Bacillus cereus (strain G9842), this protein is Putative phosphoesterase BCG9842_B4061.